A 567-amino-acid polypeptide reads, in one-letter code: Urease subunit alpha (567 aa).

A Urease domain is found at 129–567 (GGIDAHIHFI…LPLAQLYCLF (439 aa)). The Ni(2+) site is built by His-134, His-136, and Lys-217. Lys-217 is modified (N6-carboxylysine). His-219 is a substrate binding site. Ni(2+)-binding residues include His-246 and His-272. The active-site Proton donor is His-320. Residue Asp-360 coordinates Ni(2+).

This sequence belongs to the metallo-dependent hydrolases superfamily. Urease alpha subunit family. As to quaternary structure, heterotrimer of UreA (gamma), UreB (beta) and UreC (alpha) subunits. Three heterotrimers associate to form the active enzyme. The cofactor is Ni cation. Post-translationally, carboxylation allows a single lysine to coordinate two nickel ions.

It localises to the cytoplasm. It carries out the reaction urea + 2 H2O + H(+) = hydrogencarbonate + 2 NH4(+). It functions in the pathway nitrogen metabolism; urea degradation; CO(2) and NH(3) from urea (urease route): step 1/1. The chain is Urease subunit alpha from Alteromonas mediterranea (strain DSM 17117 / CIP 110805 / LMG 28347 / Deep ecotype).